A 46-amino-acid polypeptide reads, in one-letter code: uncharacterized protein (46 aa).

The segment at 1–46 is disordered; that stretch reads MNFGIKPDVSSGPRKGGPFKELSDFSKTSPTPQQPRSLSGKSVMLP. Residues 25 to 40 show a composition bias toward polar residues; it reads FSKTSPTPQQPRSLSG.

This is an uncharacterized protein from Dictyostelium discoideum (Social amoeba).